A 127-amino-acid polypeptide reads, in one-letter code: Fluoride-specific ion channel FluC (127 aa).

The next 4 helical transmembrane spans lie at 4 to 24 (LLLA…MLSM), 35 to 55 (LGTL…FAWF), 71 to 91 (TGFC…VFLL), and 103 to 123 (VLVN…IFSA). Gly-75 and Thr-78 together coordinate Na(+).

Belongs to the fluoride channel Fluc/FEX (TC 1.A.43) family.

The protein localises to the cell inner membrane. It carries out the reaction fluoride(in) = fluoride(out). Its activity is regulated as follows. Na(+) is not transported, but it plays an essential structural role and its presence is essential for fluoride channel function. Its function is as follows. Fluoride-specific ion channel. Important for reducing fluoride concentration in the cell, thus reducing its toxicity. The protein is Fluoride-specific ion channel FluC of Escherichia fergusonii (strain ATCC 35469 / DSM 13698 / CCUG 18766 / IAM 14443 / JCM 21226 / LMG 7866 / NBRC 102419 / NCTC 12128 / CDC 0568-73).